Reading from the N-terminus, the 668-residue chain is DNA ligase (668 aa).

NAD(+)-binding positions include 32–36, 81–82, and Glu-111; these read DVEYD and SL. The active-site N6-AMP-lysine intermediate is the Lys-113. 4 residues coordinate NAD(+): Arg-134, Glu-171, Lys-290, and Lys-314. Residues Cys-408, Cys-411, Cys-426, and Cys-432 each coordinate Zn(2+). Positions 591–668 constitute a BRCT domain; that stretch reads EEDLSLKGQT…DEEALIAILS (78 aa).

It belongs to the NAD-dependent DNA ligase family. LigA subfamily. It depends on Mg(2+) as a cofactor. Mn(2+) is required as a cofactor.

It carries out the reaction NAD(+) + (deoxyribonucleotide)n-3'-hydroxyl + 5'-phospho-(deoxyribonucleotide)m = (deoxyribonucleotide)n+m + AMP + beta-nicotinamide D-nucleotide.. Its function is as follows. DNA ligase that catalyzes the formation of phosphodiester linkages between 5'-phosphoryl and 3'-hydroxyl groups in double-stranded DNA using NAD as a coenzyme and as the energy source for the reaction. It is essential for DNA replication and repair of damaged DNA. This Shewanella piezotolerans (strain WP3 / JCM 13877) protein is DNA ligase.